Consider the following 1758-residue polypeptide: uncharacterized protein (1758 aa).

The N-terminal stretch at 1 to 12 is a signal peptide; it reads MCFFLGSRLAYA. One can recognise an Autotransporter domain in the interval 1465-1758; the sequence is ENLYNNGMWI…SFILGGNYYF (294 aa).

It is found in the cell outer membrane. This is an uncharacterized protein from Escherichia coli (strain K12).